The following is a 346-amino-acid chain: NADH-quinone oxidoreductase subunit H (346 aa).

8 consecutive transmembrane segments (helical) span residues 6–26 (ILFW…ACAY), 76–96 (VMYL…WSVV), 128–148 (ILFL…AGWA), 166–186 (ISYE…SGSL), 198–218 (LWNI…VAMF), 260–280 (ITMS…PFGI), 289–309 (LFGL…FLWV), and 324–344 (LGWK…SIYI).

It belongs to the complex I subunit 1 family. NDH-1 is composed of 14 different subunits. Subunits NuoA, H, J, K, L, M, N constitute the membrane sector of the complex.

It is found in the cell inner membrane. The enzyme catalyses a quinone + NADH + 5 H(+)(in) = a quinol + NAD(+) + 4 H(+)(out). In terms of biological role, NDH-1 shuttles electrons from NADH, via FMN and iron-sulfur (Fe-S) centers, to quinones in the respiratory chain. The immediate electron acceptor for the enzyme in this species is believed to be ubiquinone. Couples the redox reaction to proton translocation (for every two electrons transferred, four hydrogen ions are translocated across the cytoplasmic membrane), and thus conserves the redox energy in a proton gradient. This subunit may bind ubiquinone. The polypeptide is NADH-quinone oxidoreductase subunit H (Leptospira interrogans serogroup Icterohaemorrhagiae serovar copenhageni (strain Fiocruz L1-130)).